Here is a 137-residue protein sequence, read N- to C-terminus: Large ribosomal subunit protein uL16 (137 aa).

It belongs to the universal ribosomal protein uL16 family. Part of the 50S ribosomal subunit.

Binds 23S rRNA and is also seen to make contacts with the A and possibly P site tRNAs. This chain is Large ribosomal subunit protein uL16, found in Agrobacterium fabrum (strain C58 / ATCC 33970) (Agrobacterium tumefaciens (strain C58)).